Reading from the N-terminus, the 1279-residue chain is ATP-dependent helicase/nuclease subunit A (1279 aa).

Residues 4 to 499 enclose the UvrD-like helicase ATP-binding domain; the sequence is TKWTDEQRQA…VKLFKNFRSR (496 aa). 25–32 is an ATP binding site; sequence AGAGAGKT. Positions 526 to 853 constitute a UvrD-like helicase C-terminal domain; that stretch reads EEALKVGASY…RIMSIHKSKG (328 aa).

This sequence belongs to the helicase family. AddA subfamily. Heterodimer of AddA and AddB/RexB. It depends on Mg(2+) as a cofactor.

It catalyses the reaction Couples ATP hydrolysis with the unwinding of duplex DNA by translocating in the 3'-5' direction.. It carries out the reaction ATP + H2O = ADP + phosphate + H(+). In terms of biological role, the heterodimer acts as both an ATP-dependent DNA helicase and an ATP-dependent, dual-direction single-stranded exonuclease. Recognizes the chi site generating a DNA molecule suitable for the initiation of homologous recombination. The AddA nuclease domain is required for chi fragment generation; this subunit has the helicase and 3' -&gt; 5' nuclease activities. The chain is ATP-dependent helicase/nuclease subunit A from Clostridium botulinum (strain ATCC 19397 / Type A).